A 466-amino-acid chain; its full sequence is Sucrose-6-phosphate hydrolase (466 aa).

Substrate contacts are provided by residues Leu-38 to Asp-41, Gln-57, Tyr-100 to Ser-101, Arg-159 to Asp-160, and Glu-218. Asp-41 is an active-site residue.

It belongs to the glycosyl hydrolase 32 family.

It localises to the cytoplasm. It carries out the reaction Hydrolysis of terminal non-reducing beta-D-fructofuranoside residues in beta-D-fructofuranosides.. It participates in glycan biosynthesis; sucrose metabolism. Enables the bacterium to metabolize sucrose as a sole carbon source. The chain is Sucrose-6-phosphate hydrolase (scrB) from Salmonella typhimurium.